A 289-amino-acid polypeptide reads, in one-letter code: 4-hydroxybenzoate octaprenyltransferase (289 aa).

Transmembrane regions (helical) follow at residues 21-40, 95-115, 116-136, 138-158, 161-181, 213-233, 236-256, and 268-288; these read PIGT…LAAG, VLAL…TMNS, LTIA…FMKR, IPIP…MAYA, ANAL…WTIA, IIGV…QLMG, AWYY…QRLI, and FLNN…NYLL.

It belongs to the UbiA prenyltransferase family. Mg(2+) is required as a cofactor.

It is found in the cell inner membrane. The catalysed reaction is all-trans-octaprenyl diphosphate + 4-hydroxybenzoate = 4-hydroxy-3-(all-trans-octaprenyl)benzoate + diphosphate. It participates in cofactor biosynthesis; ubiquinone biosynthesis. In terms of biological role, catalyzes the prenylation of para-hydroxybenzoate (PHB) with an all-trans polyprenyl group. Mediates the second step in the final reaction sequence of ubiquinone-8 (UQ-8) biosynthesis, which is the condensation of the polyisoprenoid side chain with PHB, generating the first membrane-bound Q intermediate 3-octaprenyl-4-hydroxybenzoate. The chain is 4-hydroxybenzoate octaprenyltransferase from Aeromonas salmonicida (strain A449).